Consider the following 387-residue polypeptide: MKTVSIFGSTGAIGQMIIDVILASSDSYQVKALVAKSNVQLLAFQAKIVNAEMVVIADVGLYKELKDLLFGTNVKISVGDVGMQMAASLNVDYVMMAIVGIAALVPMVYLISAGVKVIALANKESVVCGGTLLFNLAREKNVNVIPVDSEHNAIFQILHSNDRENIDKITITGSGGALLYMDYDQMRNITVQETIKHPVWKMGKKISVDSATMVNKSLEIIEAYHLFSVKPEKLDVIIHPEAIVHGIVSYVDGACIAFMSVPDMKISIMYTLSWPNRMSMLYKKLNLASYHQLTFMKPDINKFPGIRLGFEILRTSNIHANSIIFNTANEIAVDAFLNRKIGFLDIVNVIYSTLDMVDCLHINSLSDILECDSIARRVASDIICKLN.

Positions 10, 11, 13, 38, and 122 each coordinate NADPH. Lys-123 contributes to the 1-deoxy-D-xylulose 5-phosphate binding site. An NADPH-binding site is contributed by Glu-124. A Mn(2+)-binding site is contributed by Asp-148. 1-deoxy-D-xylulose 5-phosphate-binding residues include Ser-149, Glu-150, Ser-174, and His-197. Glu-150 contacts Mn(2+). Gly-203 is a binding site for NADPH. 1-deoxy-D-xylulose 5-phosphate contacts are provided by Ser-210, Asn-215, Lys-216, and Glu-219. Residue Glu-219 coordinates Mn(2+).

This sequence belongs to the DXR family. The cofactor is Mg(2+). Mn(2+) serves as cofactor.

It catalyses the reaction 2-C-methyl-D-erythritol 4-phosphate + NADP(+) = 1-deoxy-D-xylulose 5-phosphate + NADPH + H(+). It participates in isoprenoid biosynthesis; isopentenyl diphosphate biosynthesis via DXP pathway; isopentenyl diphosphate from 1-deoxy-D-xylulose 5-phosphate: step 1/6. Functionally, catalyzes the NADPH-dependent rearrangement and reduction of 1-deoxy-D-xylulose-5-phosphate (DXP) to 2-C-methyl-D-erythritol 4-phosphate (MEP). The sequence is that of 1-deoxy-D-xylulose 5-phosphate reductoisomerase from Ehrlichia ruminantium (strain Welgevonden).